A 339-amino-acid polypeptide reads, in one-letter code: Adenylosuccinate synthetase (339 aa).

GTP is bound by residues 12-18 (GDEGKGS) and 42-44 (GHS). Aspartate 13 serves as the catalytic Proton acceptor. 2 residues coordinate Mg(2+): aspartate 13 and glycine 42. IMP contacts are provided by residues 13–16 (DEGK), 40–43 (NAGH), threonine 127, arginine 141, glutamine 179, threonine 194, and arginine 256. The active-site Proton donor is the histidine 43. Residue 252 to 258 (TVTGRRR) participates in substrate binding. Residues arginine 258, 284–286 (MLD), and 324–326 (KTG) contribute to the GTP site.

This sequence belongs to the adenylosuccinate synthetase family. In terms of assembly, homodimer. Requires Mg(2+) as cofactor.

It localises to the cytoplasm. It carries out the reaction IMP + L-aspartate + GTP = N(6)-(1,2-dicarboxyethyl)-AMP + GDP + phosphate + 2 H(+). It functions in the pathway purine metabolism; AMP biosynthesis via de novo pathway; AMP from IMP: step 1/2. Plays an important role in the de novo pathway of purine nucleotide biosynthesis. Catalyzes the first committed step in the biosynthesis of AMP from IMP. This Thermococcus onnurineus (strain NA1) protein is Adenylosuccinate synthetase.